Consider the following 198-residue polypeptide: Peptidyl-tRNA hydrolase (198 aa).

Residue Y15 coordinates tRNA. H20 serves as the catalytic Proton acceptor. Residues F66, N68, and N114 each contribute to the tRNA site.

Belongs to the PTH family. In terms of assembly, monomer.

Its subcellular location is the cytoplasm. The catalysed reaction is an N-acyl-L-alpha-aminoacyl-tRNA + H2O = an N-acyl-L-amino acid + a tRNA + H(+). Functionally, hydrolyzes ribosome-free peptidyl-tRNAs (with 1 or more amino acids incorporated), which drop off the ribosome during protein synthesis, or as a result of ribosome stalling. Catalyzes the release of premature peptidyl moieties from peptidyl-tRNA molecules trapped in stalled 50S ribosomal subunits, and thus maintains levels of free tRNAs and 50S ribosomes. The protein is Peptidyl-tRNA hydrolase of Cupriavidus taiwanensis (strain DSM 17343 / BCRC 17206 / CCUG 44338 / CIP 107171 / LMG 19424 / R1) (Ralstonia taiwanensis (strain LMG 19424)).